The chain runs to 184 residues: ATP-dependent protease subunit HslV (184 aa).

T12 is a catalytic residue. Residues A166, C169, and T172 each coordinate Na(+).

This sequence belongs to the peptidase T1B family. HslV subfamily. As to quaternary structure, a double ring-shaped homohexamer of HslV is capped on each side by a ring-shaped HslU homohexamer. The assembly of the HslU/HslV complex is dependent on binding of ATP.

The protein resides in the cytoplasm. The enzyme catalyses ATP-dependent cleavage of peptide bonds with broad specificity.. Its activity is regulated as follows. Allosterically activated by HslU binding. Protease subunit of a proteasome-like degradation complex believed to be a general protein degrading machinery. This Brucella canis (strain ATCC 23365 / NCTC 10854 / RM-666) protein is ATP-dependent protease subunit HslV.